A 382-amino-acid polypeptide reads, in one-letter code: SOX domain-containing protein dichaete (382 aa).

Disordered stretches follow at residues 53–142 (GGSP…EGHI) and 346–382 (YPSS…PVLY). Residues 60-69 (AGQGVNGSSG) show a composition bias toward gly residues. The span at 96 to 123 (NSSIGSAGSLGSQSSLGSNGSGLNSSSG) shows a compositional bias: low complexity. Positions 142–210 (IKRPMNAFMV…LHMKEHPDYK (69 aa)) form a DNA-binding region, HMG box. The segment covering 347-360 (PSSSTSSPGSSPGT) has biased composition (low complexity).

Initially expressed in a pair-rule-like pattern which is rapidly replaced by strong neuroectoderm expression.

It localises to the nucleus. In terms of biological role, essential for segmentation and CNS development. May modulate the actions of other transcription factors, including gap and pair-rule proteins. The chain is SOX domain-containing protein dichaete (D) from Drosophila melanogaster (Fruit fly).